The primary structure comprises 754 residues: 1,4-alpha-glucan branching enzyme GlgB (754 aa).

Catalysis depends on Asp-431, which acts as the Nucleophile. The Proton donor role is filled by Glu-484.

Belongs to the glycosyl hydrolase 13 family. GlgB subfamily. As to quaternary structure, monomer.

The enzyme catalyses Transfers a segment of a (1-&gt;4)-alpha-D-glucan chain to a primary hydroxy group in a similar glucan chain.. Its pathway is glycan biosynthesis; glycogen biosynthesis. Catalyzes the formation of the alpha-1,6-glucosidic linkages in glycogen by scission of a 1,4-alpha-linked oligosaccharide from growing alpha-1,4-glucan chains and the subsequent attachment of the oligosaccharide to the alpha-1,6 position. This Prochlorococcus marinus (strain MIT 9515) protein is 1,4-alpha-glucan branching enzyme GlgB.